Consider the following 190-residue polypeptide: COMM domain-containing protein 1 (190 aa).

N-acetylalanine is present on alanine 2. The sufficient for interaction with SLC12A2 stretch occupies residues alanine 2–serine 123. Histidine 101, methionine 110, and histidine 134 together coordinate Cu cation. Residues glycine 118–isoleucine 186 enclose the COMM domain. The tract at residues arginine 125 to asparagine 190 is required for binding to PtdIns(4,5)P2.

It belongs to the COMM domain-containing protein 1 family. In terms of assembly, component of the commander complex consisting of the CCC subcomplex and the retriever subcomplex. Component of the CCC (COMMD/CCDC22/CCDC93) subcomplex consisting of COMMD1, COMMD2, COMMD3, COMMD4, COMMD5, COMMD6, COMMD7, COMMD8, COMMD9, COMMD10, CCDC22 and CCDC93; within the complex forms a heterodimer with COMMD6. Interacts with VPS35L; the interaction associates the CCC complex with the retriever complex. Identified in a complex with an E3 ubiquitin ligase complex composed of TCEB1/elongin C, CUL2, SOCS1 and RBX1; in the complex interacts directly with SOCS1 and CUL2. Identified in a complex with NF-kappa-B. Interacts directly with SLC12A2. Interacts directly with ATP7B (via the N-terminal region). Interacts with ATP7A. Interacts with FAM107A; this interaction stabilizes COMMD1 in the nucleus. Interacts with CCS, CDKN2A, RELA, REL, RELB, NFKB1/p105, NFKB2/p100, NFKBIB, SCNN1D, SCNN1B, CFTR, CLU, SGK1, AKT1, CUL1, CUL2, CUL3, CUL4A, CUL4B, CUL5, CUL7, HIF1A. Acetylated by EP300 ina stimuli-specific manner; protecting it from XIAP-mediated proteasomal degradation and required for interaction with RElA in response to stress. Post-translationally, ubiquitinated; undergoes both 'Lys-63'- and 'Lys-48'-linked polyubiquitination. Ubiquitinated by XIAP, leading to its proteasomal degradation. In terms of tissue distribution, ubiquitous. Highest expression in the liver, with lower expression in brain, lung, placenta, pancreas, small intestine, heart, skeletal muscle, kidney and placenta. Down-regulated in cancer tissues.

It localises to the nucleus. The protein resides in the cytoplasm. Its subcellular location is the endosome membrane. It is found in the cytoplasmic vesicle. The protein localises to the early endosome. It localises to the recycling endosome. In terms of biological role, scaffold protein in the commander complex that is essential for endosomal recycling of transmembrane cargos; the commander complex is composed of the CCC subcomplex and the retriever subcomplex. Can modulate activity of cullin-RING E3 ubiquitin ligase (CRL) complexes by displacing CAND1; in vitro promotes CRL E3 activity and dissociates CAND1 from CUL1 and CUL2. Promotes ubiquitination of NF-kappa-B subunit RELA and its subsequent proteasomal degradation. Down-regulates NF-kappa-B activity. Involved in the regulation of membrane expression and ubiquitination of SLC12A2. Modulates Na(+) transport in epithelial cells by regulation of apical cell surface expression of amiloride-sensitive sodium channel (ENaC) subunits and by promoting their ubiquitination presumably involving NEDD4L. Promotes the localization of SCNN1D to recycling endosomes. Promotes CFTR cell surface expression through regulation of its ubiquitination. Down-regulates SOD1 activity by interfering with its homodimerization. Plays a role in copper ion homeostasis. Involved in copper-dependent ATP7A trafficking between the trans-Golgi network and vesicles in the cell periphery; the function is proposed to depend on its association within the CCC complex and cooperation with the WASH complex on early endosomes. Can bind one copper ion per monomer. May function to facilitate biliary copper excretion within hepatocytes. Binds to phosphatidylinositol 4,5-bisphosphate (PtdIns(4,5)P2). Involved in the regulation of HIF1A-mediated transcription; competes with ARNT/Hif-1-beta for binding to HIF1A resulting in decreased DNA binding and impaired transcriptional activation by HIF-1. Negatively regulates neuroblastoma G1/S phase cell cycle progression and cell proliferation by stimulating ubiquitination of NF-kappa-B subunit RELA and NF-kappa-B degradation in a FAM107A- and actin-dependent manner. This is COMM domain-containing protein 1 (COMMD1) from Homo sapiens (Human).